The following is a 246-amino-acid chain: UDP-N-acetyl-D-mannosaminuronic acid transferase (246 aa).

It belongs to the glycosyltransferase 26 family.

The enzyme catalyses UDP-N-acetyl-alpha-D-mannosaminouronate + N-acetyl-alpha-D-glucosaminyl-di-trans,octa-cis-undecaprenyl diphosphate = beta-D-ManNAcA-(1-&gt;4)-alpha-D-GlcNAc-di-trans,octa-cis-undecaprenyl diphosphate + UDP + H(+). Its pathway is bacterial outer membrane biogenesis; enterobacterial common antigen biosynthesis. In terms of biological role, catalyzes the synthesis of Und-PP-GlcNAc-ManNAcA (Lipid II), the second lipid-linked intermediate involved in enterobacterial common antigen (ECA) synthesis. This Escherichia coli O157:H7 protein is UDP-N-acetyl-D-mannosaminuronic acid transferase.